Consider the following 305-residue polypeptide: UDP-N-acetylenolpyruvoylglucosamine reductase 2 (305 aa).

The 165-residue stretch at 33–197 folds into the FAD-binding PCMH-type domain; sequence VGGKADVFVA…LEARFELEEG (165 aa). The active site involves Arg-176. The active-site Proton donor is the Ser-226. Residue Glu-296 is part of the active site.

The protein belongs to the MurB family. It depends on FAD as a cofactor.

It is found in the cytoplasm. It carries out the reaction UDP-N-acetyl-alpha-D-muramate + NADP(+) = UDP-N-acetyl-3-O-(1-carboxyvinyl)-alpha-D-glucosamine + NADPH + H(+). It functions in the pathway cell wall biogenesis; peptidoglycan biosynthesis. Its function is as follows. Cell wall formation. The polypeptide is UDP-N-acetylenolpyruvoylglucosamine reductase 2 (Bacillus cereus (strain ATCC 10987 / NRS 248)).